Here is a 527-residue protein sequence, read N- to C-terminus: Monooxygenase aurF (527 aa).

Positions 1 to 19 (MPNPTVAIVGLGALGLVTL) are cleaved as a signal peptide. An N-linked (GlcNAc...) asparagine glycan is attached at Asn59.

It belongs to the FMO family. Might be part of an extracellular enzyme complex composed of GIP1, aurF, aurO and aurS. FAD serves as cofactor.

The protein resides in the secreted. The protein localises to the extracellular space. Its pathway is pigment biosynthesis. Monooxygenase; part of the gene cluster that mediates the biosynthesis of aurofusarin, a red mycelium pigment which is acting as a mycotoxin. The first step is performed by the polyketide synthase which condenses one acetyl-CoA and 6 malonyl-CoA units to form the first intermediate, the cyclic heptaketide and yellow pigment YWA1. The C2 hydroxyl group in the pyrone ring of YWA1 is probably formed during ring closure by an aldol-type cyclization reaction. The dehydratase aurZ then acts as the first tailoring enzyme in the aurofusarin biosynthetic pathway by converting YWA1 to nor-rubrofusarin. Nor-rubrofusarin is then methylated to rubrofusarin by the O-methyltransferase aurJ. Rubrofusarin is then transported across the plasma membrane by the rubrofusarin-specific pump aurT for further enzymatic processing by the extracellular complex composed of GIP1, aurF, aurO and aurS to yield aurofusarin. This Gibberella zeae (strain ATCC MYA-4620 / CBS 123657 / FGSC 9075 / NRRL 31084 / PH-1) (Wheat head blight fungus) protein is Monooxygenase aurF.